The chain runs to 247 residues: Probable transcriptional regulatory protein DVU_2259 (247 aa).

Residues 1–22 (MAGHSKWANIQHRKGRQDAKRG) form a disordered region.

It belongs to the TACO1 family.

The protein localises to the cytoplasm. This chain is Probable transcriptional regulatory protein DVU_2259, found in Nitratidesulfovibrio vulgaris (strain ATCC 29579 / DSM 644 / CCUG 34227 / NCIMB 8303 / VKM B-1760 / Hildenborough) (Desulfovibrio vulgaris).